A 144-amino-acid chain; its full sequence is Large ribosomal subunit protein uL15 (144 aa).

The segment at 1–53 (MRLNTLSPAEGAKHNAKRLGRGIGSGLGKTSGRGHKGQKARTGGGVRRGFEGG) is disordered. A compositionally biased stretch (gly residues) spans 21–31 (RGIGSGLGKTS).

Belongs to the universal ribosomal protein uL15 family. In terms of assembly, part of the 50S ribosomal subunit.

Its function is as follows. Binds to the 23S rRNA. The chain is Large ribosomal subunit protein uL15 from Histophilus somni (strain 129Pt) (Haemophilus somnus).